A 192-amino-acid polypeptide reads, in one-letter code: Adenylate kinase (192 aa).

10-15 (GAGKGT) lines the ATP pocket. The tract at residues 30–59 (STGDMLRAAVAQATEVGKRAKAVMDAGQLV) is NMP. AMP contacts are provided by residues T31, R36, 57 to 59 (QLV), 85 to 88 (GYPR), and Q92. The LID stretch occupies residues 126-142 (NRVAETVAAGGTVRSDD). Position 127 (R127) interacts with ATP. R139 and R150 together coordinate AMP. A178 contacts ATP.

The protein belongs to the adenylate kinase family. Monomer.

It is found in the cytoplasm. It carries out the reaction AMP + ATP = 2 ADP. It participates in purine metabolism; AMP biosynthesis via salvage pathway; AMP from ADP: step 1/1. Functionally, catalyzes the reversible transfer of the terminal phosphate group between ATP and AMP. Plays an important role in cellular energy homeostasis and in adenine nucleotide metabolism. The chain is Adenylate kinase from Sinorhizobium medicae (strain WSM419) (Ensifer medicae).